A 103-amino-acid chain; its full sequence is UPF0145 protein BLi01945/BL05168 (103 aa).

Belongs to the UPF0145 family.

This Bacillus licheniformis (strain ATCC 14580 / DSM 13 / JCM 2505 / CCUG 7422 / NBRC 12200 / NCIMB 9375 / NCTC 10341 / NRRL NRS-1264 / Gibson 46) protein is UPF0145 protein BLi01945/BL05168.